We begin with the raw amino-acid sequence, 234 residues long: Large ribosomal subunit protein uL1 (234 aa).

Belongs to the universal ribosomal protein uL1 family. Part of the 50S ribosomal subunit.

Its function is as follows. Binds directly to 23S rRNA. The L1 stalk is quite mobile in the ribosome, and is involved in E site tRNA release. In terms of biological role, protein L1 is also a translational repressor protein, it controls the translation of the L11 operon by binding to its mRNA. This is Large ribosomal subunit protein uL1 from Klebsiella pneumoniae subsp. pneumoniae (strain ATCC 700721 / MGH 78578).